We begin with the raw amino-acid sequence, 543 residues long: Chaperonin GroEL (543 aa).

Residues 30–33 (TLGP), Lys51, 87–91 (DGTTT), Gly415, 479–481 (NAA), and Asp495 each bind ATP.

It belongs to the chaperonin (HSP60) family. Forms a cylinder of 14 subunits composed of two heptameric rings stacked back-to-back. Interacts with the co-chaperonin GroES.

The protein localises to the cytoplasm. The enzyme catalyses ATP + H2O + a folded polypeptide = ADP + phosphate + an unfolded polypeptide.. Its function is as follows. Together with its co-chaperonin GroES, plays an essential role in assisting protein folding. The GroEL-GroES system forms a nano-cage that allows encapsulation of the non-native substrate proteins and provides a physical environment optimized to promote and accelerate protein folding. The polypeptide is Chaperonin GroEL (Francisella philomiragia subsp. philomiragia (strain ATCC 25017 / CCUG 19701 / FSC 153 / O#319-036)).